The sequence spans 177 residues: MPTALCSIALALLVALHEGKSQAATTPIPEQPAPLPRARGSHLRTRRCSCSSWLDKECVYFCHLDIIWVNTPGQTAPYGLGNPPRRRRRSLPRRCECYSARDPACATFCHQRPWTDAVAVPGSGSPAAAFQDGKTQATAGELLQRLRVISATKIHFARQQQKPTRETRPTHSRQRKR.

Residues 1 to 23 form the signal peptide; sequence MPTALCSIALALLVALHEGKSQA. Residues 24–45 constitute a propeptide that is removed on maturation; the sequence is ATTPIPEQPAPLPRARGSHLRT. 2 cysteine pairs are disulfide-bonded: Cys48–Cys62 and Cys50–Cys58. The propeptide occupies 69 to 177; it reads VNTPGQTAPY…RPTHSRQRKR (109 aa). Residues 95 to 110 are endothelin-like; that stretch reads CECYSARDPACATFCH. Positions 155–177 are disordered; it reads HFARQQQKPTRETRPTHSRQRKR.

Belongs to the endothelin/sarafotoxin family. In terms of tissue distribution, expressed in various organs including heart, lung, liver, kidney, gastrointestinal tract, uterus and ovary, but not in spleen. Within the gastrointestinal tract, gene expression was detected in rumen, a ruminant-specific digestive organ, as well as stomach, duodenum and colon.

It is found in the secreted. Its function is as follows. Endothelins are endothelium-derived vasoconstrictor peptides. The sequence is that of Endothelin-2 (EDN2) from Bos taurus (Bovine).